We begin with the raw amino-acid sequence, 167 residues long: NADH-quinone oxidoreductase subunit I 1 (167 aa).

4Fe-4S ferredoxin-type domains follow at residues 58–88 and 98–127; these read LRRY…IDAE and TRYD…EGPN. [4Fe-4S] cluster contacts are provided by C68, C71, C74, C78, C107, C110, C113, and C117.

Belongs to the complex I 23 kDa subunit family. As to quaternary structure, NDH-1 is composed of 14 different subunits. Subunits NuoA, H, J, K, L, M, N constitute the membrane sector of the complex. [4Fe-4S] cluster serves as cofactor.

The protein resides in the cell inner membrane. The enzyme catalyses a quinone + NADH + 5 H(+)(in) = a quinol + NAD(+) + 4 H(+)(out). NDH-1 shuttles electrons from NADH, via FMN and iron-sulfur (Fe-S) centers, to quinones in the respiratory chain. The immediate electron acceptor for the enzyme in this species is believed to be ubiquinone. Couples the redox reaction to proton translocation (for every two electrons transferred, four hydrogen ions are translocated across the cytoplasmic membrane), and thus conserves the redox energy in a proton gradient. The chain is NADH-quinone oxidoreductase subunit I 1 from Cereibacter sphaeroides (strain ATCC 17029 / ATH 2.4.9) (Rhodobacter sphaeroides).